Reading from the N-terminus, the 273-residue chain is Putative pyruvate, phosphate dikinase regulatory protein (273 aa).

Residue 149–156 (GPSRTSKT) coordinates ADP.

Belongs to the pyruvate, phosphate/water dikinase regulatory protein family. PDRP subfamily.

It carries out the reaction N(tele)-phospho-L-histidyl/L-threonyl-[pyruvate, phosphate dikinase] + ADP = N(tele)-phospho-L-histidyl/O-phospho-L-threonyl-[pyruvate, phosphate dikinase] + AMP + H(+). The enzyme catalyses N(tele)-phospho-L-histidyl/O-phospho-L-threonyl-[pyruvate, phosphate dikinase] + phosphate + H(+) = N(tele)-phospho-L-histidyl/L-threonyl-[pyruvate, phosphate dikinase] + diphosphate. Bifunctional serine/threonine kinase and phosphorylase involved in the regulation of the pyruvate, phosphate dikinase (PPDK) by catalyzing its phosphorylation/dephosphorylation. This chain is Putative pyruvate, phosphate dikinase regulatory protein, found in Rickettsia canadensis (strain McKiel).